The sequence spans 379 residues: 23S rRNA (uracil(747)-C(5))-methyltransferase RlmC (379 aa).

Residues Cys-3, Cys-11, Cys-14, and Cys-87 each coordinate [4Fe-4S] cluster. The S-adenosyl-L-methionine site is built by Gln-212, Phe-241, Glu-262, and Asn-309. The active-site Nucleophile is the Cys-336.

This sequence belongs to the class I-like SAM-binding methyltransferase superfamily. RNA M5U methyltransferase family. RlmC subfamily.

The enzyme catalyses uridine(747) in 23S rRNA + S-adenosyl-L-methionine = 5-methyluridine(747) in 23S rRNA + S-adenosyl-L-homocysteine + H(+). Catalyzes the formation of 5-methyl-uridine at position 747 (m5U747) in 23S rRNA. The polypeptide is 23S rRNA (uracil(747)-C(5))-methyltransferase RlmC (Shewanella loihica (strain ATCC BAA-1088 / PV-4)).